Consider the following 106-residue polypeptide: uncharacterized protein (106 aa).

A run of 2 helical transmembrane segments spans residues 43–63 (CSTIIACNLGSWFFKISLAIV) and 86–106 (IPELALIIICTFIYFLYFSLF).

The protein localises to the membrane. This is an uncharacterized protein from Saccharomyces cerevisiae (strain ATCC 204508 / S288c) (Baker's yeast).